The sequence spans 344 residues: Ferrochelatase (344 aa).

His211 and Glu292 together coordinate Fe cation.

It belongs to the ferrochelatase family.

Its subcellular location is the cytoplasm. It catalyses the reaction heme b + 2 H(+) = protoporphyrin IX + Fe(2+). It functions in the pathway porphyrin-containing compound metabolism; protoheme biosynthesis; protoheme from protoporphyrin-IX: step 1/1. Catalyzes the ferrous insertion into protoporphyrin IX. This Methylobacillus flagellatus (strain ATCC 51484 / DSM 6875 / VKM B-1610 / KT) protein is Ferrochelatase.